The primary structure comprises 531 residues: Peptide chain release factor 3 (531 aa).

The tr-type G domain occupies 13-282; sequence SKRRTFAIIS…GLTQWAPSPM (270 aa). GTP-binding positions include 22–29, 90–94, and 144–147; these read SHPDAGKT, DTPGH, and NKLD.

This sequence belongs to the TRAFAC class translation factor GTPase superfamily. Classic translation factor GTPase family. PrfC subfamily.

It localises to the cytoplasm. Its function is as follows. Increases the formation of ribosomal termination complexes and stimulates activities of RF-1 and RF-2. It binds guanine nucleotides and has strong preference for UGA stop codons. It may interact directly with the ribosome. The stimulation of RF-1 and RF-2 is significantly reduced by GTP and GDP, but not by GMP. The protein is Peptide chain release factor 3 of Vibrio cholerae serotype O1 (strain ATCC 39315 / El Tor Inaba N16961).